The sequence spans 347 residues: Phosphate acyltransferase (347 aa).

The protein belongs to the PlsX family. As to quaternary structure, homodimer. Probably interacts with PlsY.

The protein resides in the cytoplasm. It catalyses the reaction a fatty acyl-[ACP] + phosphate = an acyl phosphate + holo-[ACP]. Its pathway is lipid metabolism; phospholipid metabolism. Functionally, catalyzes the reversible formation of acyl-phosphate (acyl-PO(4)) from acyl-[acyl-carrier-protein] (acyl-ACP). This enzyme utilizes acyl-ACP as fatty acyl donor, but not acyl-CoA. The polypeptide is Phosphate acyltransferase (Sinorhizobium fredii (strain NBRC 101917 / NGR234)).